The sequence spans 275 residues: Methylthioribulose-1-phosphate dehydratase (275 aa).

Cysteine 125 serves as a coordination point for substrate. Residues histidine 143 and histidine 145 each coordinate Zn(2+). Glutamate 168 acts as the Proton donor/acceptor in catalysis. Histidine 233 is a binding site for Zn(2+).

Belongs to the aldolase class II family. MtnB subfamily. Requires Zn(2+) as cofactor.

It localises to the cytoplasm. It catalyses the reaction 5-(methylsulfanyl)-D-ribulose 1-phosphate = 5-methylsulfanyl-2,3-dioxopentyl phosphate + H2O. Its pathway is amino-acid biosynthesis; L-methionine biosynthesis via salvage pathway; L-methionine from S-methyl-5-thio-alpha-D-ribose 1-phosphate: step 2/6. In terms of biological role, catalyzes the dehydration of methylthioribulose-1-phosphate (MTRu-1-P) into 2,3-diketo-5-methylthiopentyl-1-phosphate (DK-MTP-1-P). This is Methylthioribulose-1-phosphate dehydratase from Lodderomyces elongisporus (strain ATCC 11503 / CBS 2605 / JCM 1781 / NBRC 1676 / NRRL YB-4239) (Yeast).